Reading from the N-terminus, the 376-residue chain is Succinyl-diaminopimelate desuccinylase (376 aa).

His-67 serves as a coordination point for Zn(2+). Asp-69 is a catalytic residue. Residue Asp-100 participates in Zn(2+) binding. The active-site Proton acceptor is Glu-134. Positions 135, 163, and 349 each coordinate Zn(2+).

This sequence belongs to the peptidase M20A family. DapE subfamily. As to quaternary structure, homodimer. Zn(2+) serves as cofactor. The cofactor is Co(2+).

It carries out the reaction N-succinyl-(2S,6S)-2,6-diaminopimelate + H2O = (2S,6S)-2,6-diaminopimelate + succinate. It functions in the pathway amino-acid biosynthesis; L-lysine biosynthesis via DAP pathway; LL-2,6-diaminopimelate from (S)-tetrahydrodipicolinate (succinylase route): step 3/3. Its function is as follows. Catalyzes the hydrolysis of N-succinyl-L,L-diaminopimelic acid (SDAP), forming succinate and LL-2,6-diaminopimelate (DAP), an intermediate involved in the bacterial biosynthesis of lysine and meso-diaminopimelic acid, an essential component of bacterial cell walls. The chain is Succinyl-diaminopimelate desuccinylase from Shewanella sediminis (strain HAW-EB3).